A 72-amino-acid chain; its full sequence is Translation initiation factor IF-1 (72 aa).

Positions 1-72 constitute an S1-like domain; the sequence is MPKDDSIEVE…TRGRITYRAK (72 aa).

This sequence belongs to the IF-1 family. Component of the 30S ribosomal translation pre-initiation complex which assembles on the 30S ribosome in the order IF-2 and IF-3, IF-1 and N-formylmethionyl-tRNA(fMet); mRNA recruitment can occur at any time during PIC assembly.

The protein localises to the cytoplasm. One of the essential components for the initiation of protein synthesis. Stabilizes the binding of IF-2 and IF-3 on the 30S subunit to which N-formylmethionyl-tRNA(fMet) subsequently binds. Helps modulate mRNA selection, yielding the 30S pre-initiation complex (PIC). Upon addition of the 50S ribosomal subunit IF-1, IF-2 and IF-3 are released leaving the mature 70S translation initiation complex. This Myxococcus xanthus (strain DK1622) protein is Translation initiation factor IF-1.